The following is a 302-amino-acid chain: Diacetylchitobiose uptake system permease protein NgcG (302 aa).

Transmembrane regions (helical) follow at residues 40 to 60 (LLIL…MSSF), 99 to 119 (VIVV…CAYV), 131 to 151 (IYYV…VPLF), 166 to 186 (LILT…YSFF), 221 to 241 (AAVA…PVAL), and 268 to 288 (GALF…YCVF). The ABC transmembrane type-1 domain occupies 95–288 (FLNSVIVVVS…VPVLLVYCVF (194 aa)).

Belongs to the binding-protein-dependent transport system permease family. As to quaternary structure, the complex is composed of two ATP-binding proteins (MsiK), two transmembrane proteins (NgcF and NgcG) and a solute-binding protein (NgcE).

Its subcellular location is the cell membrane. Part of the ABC transporter complex NgcEFG-MsiK involved in N,N'-diacetylchitobiose ((GlcNAc)2) uptake. Responsible for the translocation of the substrate across the membrane. This Streptomyces coelicolor (strain ATCC BAA-471 / A3(2) / M145) protein is Diacetylchitobiose uptake system permease protein NgcG.